The sequence spans 140 residues: PDZ domain-containing protein 11 (140 aa).

In terms of domain architecture, PDZ spans 47-129 (TVVLKKPPGA…ITMRVRYFPY (83 aa)).

The protein resides in the cytoplasm. In Gallus gallus (Chicken), this protein is PDZ domain-containing protein 11 (PDZD11).